The chain runs to 240 residues: UDP-2,3-diacylglucosamine hydrolase (240 aa).

Positions 8, 10, 41, 79, and 114 each coordinate Mn(2+). 79–80 (NR) provides a ligand contact to substrate. Aspartate 122, serine 160, asparagine 164, lysine 167, and histidine 195 together coordinate substrate. Residues histidine 195 and histidine 197 each contribute to the Mn(2+) site.

It belongs to the LpxH family. Mn(2+) serves as cofactor.

Its subcellular location is the cell inner membrane. It carries out the reaction UDP-2-N,3-O-bis[(3R)-3-hydroxytetradecanoyl]-alpha-D-glucosamine + H2O = 2-N,3-O-bis[(3R)-3-hydroxytetradecanoyl]-alpha-D-glucosaminyl 1-phosphate + UMP + 2 H(+). It participates in glycolipid biosynthesis; lipid IV(A) biosynthesis; lipid IV(A) from (3R)-3-hydroxytetradecanoyl-[acyl-carrier-protein] and UDP-N-acetyl-alpha-D-glucosamine: step 4/6. In terms of biological role, hydrolyzes the pyrophosphate bond of UDP-2,3-diacylglucosamine to yield 2,3-diacylglucosamine 1-phosphate (lipid X) and UMP by catalyzing the attack of water at the alpha-P atom. Involved in the biosynthesis of lipid A, a phosphorylated glycolipid that anchors the lipopolysaccharide to the outer membrane of the cell. The sequence is that of UDP-2,3-diacylglucosamine hydrolase from Pectobacterium atrosepticum (strain SCRI 1043 / ATCC BAA-672) (Erwinia carotovora subsp. atroseptica).